Reading from the N-terminus, the 132-residue chain is Ribosome-binding factor A (132 aa).

Belongs to the RbfA family. As to quaternary structure, monomer. Binds 30S ribosomal subunits, but not 50S ribosomal subunits or 70S ribosomes.

The protein localises to the cytoplasm. Functionally, one of several proteins that assist in the late maturation steps of the functional core of the 30S ribosomal subunit. Associates with free 30S ribosomal subunits (but not with 30S subunits that are part of 70S ribosomes or polysomes). Required for efficient processing of 16S rRNA. May interact with the 5'-terminal helix region of 16S rRNA. This chain is Ribosome-binding factor A, found in Pasteurella multocida (strain Pm70).